Consider the following 87-residue polypeptide: Apolipoprotein C-I (87 aa).

Residues Met-1–Ala-26 form the signal peptide.

Belongs to the apolipoprotein C1 family.

It localises to the secreted. In terms of biological role, inhibitor of lipoprotein binding to the low density lipoprotein (LDL) receptor, LDL receptor-related protein, and very low density lipoprotein (VLDL) receptor. Associates with high density lipoproteins (HDL) and the triacylglycerol-rich lipoproteins in the plasma and makes up about 10% of the protein of the VLDL and 2% of that of HDL. Appears to interfere directly with fatty acid uptake and is also the major plasma inhibitor of cholesteryl ester transfer protein (CETP). Binds free fatty acids and reduces their intracellular esterification. Modulates the interaction of APOE with beta-migrating VLDL and inhibits binding of beta-VLDL to the LDL receptor-related protein. The chain is Apolipoprotein C-I (APOC1) from Pteropus vampyrus (Large flying fox).